Here is a 502-residue protein sequence, read N- to C-terminus: 4,4'-diapophytoene desaturase (4,4'-diaponeurosporene-forming) (502 aa).

Residue 5–17 coordinates FAD; sequence VIGAGVTGLAAAA.

The protein belongs to the carotenoid/retinoid oxidoreductase family. CrtN subfamily.

The enzyme catalyses 15-cis-4,4'-diapophytoene + 3 FAD + 3 H(+) = all-trans-4,4'-diaponeurosporene + 3 FADH2. Its pathway is carotenoid biosynthesis; staphyloxanthin biosynthesis; staphyloxanthin from farnesyl diphosphate: step 2/5. Involved in the biosynthesis of the yellow-orange carotenoid staphyloxanthin, which plays a role in the virulence via its protective function against oxidative stress. Catalyzes three successive dehydrogenation reactions that lead to the introduction of three double bonds into 4,4'-diapophytoene (dehydrosqualene), with 4,4'-diapophytofluene and 4,4'-diapo-zeta-carotene as intermediates, and 4,4'-diaponeurosporene (the major deep-yellow pigment in staphylococci strains) as the end product. The chain is 4,4'-diapophytoene desaturase (4,4'-diaponeurosporene-forming) from Staphylococcus aureus (strain COL).